Consider the following 48-residue polypeptide: Cathepsin B (48 aa).

The protein belongs to the peptidase C1 family. Dimer of a heavy chain and a light chain cross-linked by a disulfide bond.

The protein resides in the lysosome. The catalysed reaction is Hydrolysis of proteins with broad specificity for peptide bonds. Preferentially cleaves -Arg-Arg-|-Xaa bonds in small molecule substrates (thus differing from cathepsin L). In addition to being an endopeptidase, shows peptidyl-dipeptidase activity, liberating C-terminal dipeptides.. Functionally, thiol protease which is believed to participate in intracellular degradation and turnover of proteins. Has also been implicated in tumor invasion and metastasis. The chain is Cathepsin B (CTSB) from Coturnix japonica (Japanese quail).